Reading from the N-terminus, the 494-residue chain is Arp2/3 complex-activating protein rickA (494 aa).

The tract at residues 312–494 (PLENNIPPPP…RNSQKPSFVR (183 aa)) is disordered. Pro residues predominate over residues 317-357 (IPPPPPPPPPLPDNNIPPPPPPPPPLPDNNIPPPPPPPPMA). The region spanning 383–400 (DTSDLMREIAGPKKLKKV) is the WH2 domain. The tract at residues 421-454 (VNKPSGLESIFARRVAIEMSDSSSSESDSGNWSD) is central and acidic domains. The segment covering 440–456 (SDSSSSESDSGNWSDVS) has biased composition (low complexity). Over residues 477 to 494 (THAQKINNRNSQKPSFVR) the composition is skewed to polar residues.

The protein resides in the cell surface. Recruits and activates the Arp2/3 complex, which in turn leads to actin polymerization, promoting Rickettsia motility during infection. The polypeptide is Arp2/3 complex-activating protein rickA (rickA) (Rickettsia rickettsii).